A 281-amino-acid chain; its full sequence is Phosphonates import ATP-binding protein PhnC 2 (281 aa).

Residues 4-238 (LTVDNVTKTY…LVDDLYGNVE (235 aa)) form the ABC transporter domain. 35–42 (GESGAGKS) serves as a coordination point for ATP. The tract at residues 243–281 (ATDNSDNSTVDTSDGTRYDTETGSDGTDEVDVIGRQVES) is disordered. A compositionally biased stretch (low complexity) spans 244 to 255 (TDNSDNSTVDTS).

It belongs to the ABC transporter superfamily. Phosphonates importer (TC 3.A.1.9.1) family. In terms of assembly, the complex is composed of two ATP-binding proteins (PhnC), two transmembrane proteins (PhnE) and a solute-binding protein (PhnD).

It is found in the cell membrane. It carries out the reaction phosphonate(out) + ATP + H2O = phosphonate(in) + ADP + phosphate + H(+). Its function is as follows. Part of the ABC transporter complex PhnCDE involved in phosphonates import. Responsible for energy coupling to the transport system. The protein is Phosphonates import ATP-binding protein PhnC 2 of Haloquadratum walsbyi (strain DSM 16790 / HBSQ001).